The sequence spans 736 residues: Probable methionine--tRNA ligase, cytoplasmic (736 aa).

The 'HIGH' region signature appears at 25 to 35 (PYVNNVPHLGN). A 'KMSKS' region motif is present at residues 346–350 (KFSKS). Lys349 is a binding site for ATP. Positions 573 to 680 (PEFPIDMKIA…QSIEAGSKIA (108 aa)) constitute a tRNA-binding domain.

It belongs to the class-I aminoacyl-tRNA synthetase family.

The protein resides in the cytoplasm. It carries out the reaction tRNA(Met) + L-methionine + ATP = L-methionyl-tRNA(Met) + AMP + diphosphate. In Dictyostelium discoideum (Social amoeba), this protein is Probable methionine--tRNA ligase, cytoplasmic (metS).